Here is a 301-residue protein sequence, read N- to C-terminus: Cytochrome c biogenesis protein CcsA (301 aa).

8 helical membrane-spanning segments follow: residues 13–33 (NNIT…GLIF), 39–59 (VFYI…IILG), 73–93 (LYES…YLEY), 97–117 (LYLI…FSTL), 146–166 (MLSY…LVLI), 209–229 (TIGF…VWAN), 236–256 (WSWD…AAYL), and 270–290 (AYLA…VNFL).

The protein belongs to the CcmF/CycK/Ccl1/NrfE/CcsA family. May interact with Ccs1.

The protein resides in the plastid. It is found in the chloroplast thylakoid membrane. Required during biogenesis of c-type cytochromes (cytochrome c6 and cytochrome f) at the step of heme attachment. The protein is Cytochrome c biogenesis protein CcsA of Guillardia theta (Cryptophyte).